Here is a 33-residue protein sequence, read N- to C-terminus: uncharacterized protein (33 aa).

This is an uncharacterized protein from Archaeoglobus fulgidus (strain ATCC 49558 / DSM 4304 / JCM 9628 / NBRC 100126 / VC-16).